We begin with the raw amino-acid sequence, 213 residues long: Ribonuclease HII (213 aa).

The 196-residue stretch at 18-213 (GLHAGVDEVG…RPVKERLAKR (196 aa)) folds into the RNase H type-2 domain. A divalent metal cation contacts are provided by aspartate 24, glutamate 25, and aspartate 116.

The protein belongs to the RNase HII family. The cofactor is Mn(2+). Mg(2+) is required as a cofactor.

It is found in the cytoplasm. The enzyme catalyses Endonucleolytic cleavage to 5'-phosphomonoester.. Endonuclease that specifically degrades the RNA of RNA-DNA hybrids. This chain is Ribonuclease HII, found in Shewanella woodyi (strain ATCC 51908 / MS32).